The chain runs to 449 residues: Phosphoglucosamine mutase (449 aa).

The active-site Phosphoserine intermediate is Ser104. Residues Ser104, Asp243, Asp245, and Asp247 each contribute to the Mg(2+) site. A Phosphoserine modification is found at Ser104.

The protein belongs to the phosphohexose mutase family. It depends on Mg(2+) as a cofactor. In terms of processing, activated by phosphorylation.

The enzyme catalyses alpha-D-glucosamine 1-phosphate = D-glucosamine 6-phosphate. In terms of biological role, catalyzes the conversion of glucosamine-6-phosphate to glucosamine-1-phosphate. The chain is Phosphoglucosamine mutase from Xanthomonas euvesicatoria pv. vesicatoria (strain 85-10) (Xanthomonas campestris pv. vesicatoria).